The following is a 300-amino-acid chain: MATKRAHPEDETHESKRAAQETQLLPYNGSGFLMQVENDGALRKFTPINAMRAQQNLSWQCLVLLNCQALDFSAINFHYGDLQYLKDKFTELQNLSNYYEWRKQERPEDKVCIMEAAVGKCTYTIGLRVKGRPNGFAIAEFGSVHRSKSTFGQFLSTTWSAIHEHNSVFGKIMDSYYKHEYPLKLESSVCVHLPEKDYEREIKARQFLWVRRDNNPELYATGQLDRPLEVAPMTLAEFDRLFEVNKTDGPSQEVPVLVCGRIDGVKYGKEIQMTDVNGRKFSEKPYSLAFKPVLYLILEP.

Basic and acidic residues predominate over residues 1–19; that stretch reads MATKRAHPEDETHESKRAA. The segment at 1-20 is disordered; it reads MATKRAHPEDETHESKRAAQ.

This is an uncharacterized protein from Orgyia pseudotsugata multicapsid polyhedrosis virus (OpMNPV).